The following is a 443-amino-acid chain: Ribosomal protein uS12 methylthiotransferase RimO (443 aa).

Positions 8–118 (PKVGFVSLGC…VVNAVHEVVP (111 aa)) constitute an MTTase N-terminal domain. Positions 17, 53, 82, 151, 155, and 158 each coordinate [4Fe-4S] cluster. Residues 137–375 (LTPRHYAYLK…MAHQQAISAA (239 aa)) form the Radical SAM core domain. Residues 378-443 (QQRIGKEIEV…DEYDMWAEPI (66 aa)) form the TRAM domain.

It belongs to the methylthiotransferase family. RimO subfamily. [4Fe-4S] cluster is required as a cofactor.

Its subcellular location is the cytoplasm. The enzyme catalyses L-aspartate(89)-[ribosomal protein uS12]-hydrogen + (sulfur carrier)-SH + AH2 + 2 S-adenosyl-L-methionine = 3-methylsulfanyl-L-aspartate(89)-[ribosomal protein uS12]-hydrogen + (sulfur carrier)-H + 5'-deoxyadenosine + L-methionine + A + S-adenosyl-L-homocysteine + 2 H(+). Functionally, catalyzes the methylthiolation of an aspartic acid residue of ribosomal protein uS12. This Pseudomonas entomophila (strain L48) protein is Ribosomal protein uS12 methylthiotransferase RimO.